Here is a 1212-residue protein sequence, read N- to C-terminus: Probable serine/threonine-protein kinase DDB_G0284491 (1212 aa).

The chain crosses the membrane as a helical span at residues 197 to 217 (LFHSFSLLNLYVYLIIVIRII). 14 N-linked (GlcNAc...) asparagine glycosylation sites follow: Asn229, Asn299, Asn309, Asn328, Asn335, Asn341, Asn344, Asn391, Asn419, Asn422, Asn426, Asn427, Asn435, and Asn499. The interval 288 to 329 (LNNNNDNNLNNNNSNNNLNNNNNSNSNFNNDNNLNSNINSND) is disordered. 2 disordered regions span residues 412–439 (GNSN…NSGG) and 489–517 (IIKN…DYEE). Low complexity predominate over residues 489-507 (IIKNNNNNNNNNSNNNNNN). A compositionally biased stretch (acidic residues) spans 508–517 (NDEDDSDYEE). Residues 673–693 (IQIFDDYSLIIALRLLMNFIL) traverse the membrane as a helical segment. The span at 703 to 720 (VPPPPTQPSSRPQSPPTV) shows a compositional bias: pro residues. Disordered stretches follow at residues 703 to 733 (VPPP…HHSG) and 751 to 813 (EVVS…NNNN). A Protein kinase domain is found at 865–1182 (ETEIEPFASG…EVYNDLQDIY (318 aa)). ATP is bound by residues 871-879 (FASGGQANI) and Lys924. Asp1035 acts as the Proton acceptor in catalysis.

This sequence belongs to the protein kinase superfamily. Ser/Thr protein kinase family.

Its subcellular location is the membrane. It carries out the reaction L-seryl-[protein] + ATP = O-phospho-L-seryl-[protein] + ADP + H(+). The catalysed reaction is L-threonyl-[protein] + ATP = O-phospho-L-threonyl-[protein] + ADP + H(+). This is Probable serine/threonine-protein kinase DDB_G0284491 from Dictyostelium discoideum (Social amoeba).